A 401-amino-acid chain; its full sequence is Acetate kinase (401 aa).

A Mg(2+)-binding site is contributed by asparagine 7. Residue lysine 14 coordinates ATP. A substrate-binding site is contributed by arginine 92. Aspartate 149 serves as the catalytic Proton donor/acceptor. ATP is bound by residues histidine 209–glycine 213, aspartate 283–arginine 285, and glycine 331–asparagine 335. A Mg(2+)-binding site is contributed by glutamate 385.

Belongs to the acetokinase family. In terms of assembly, homodimer. Requires Mg(2+) as cofactor. It depends on Mn(2+) as a cofactor.

The protein localises to the cytoplasm. It catalyses the reaction acetate + ATP = acetyl phosphate + ADP. Its pathway is metabolic intermediate biosynthesis; acetyl-CoA biosynthesis; acetyl-CoA from acetate: step 1/2. Catalyzes the formation of acetyl phosphate from acetate and ATP. Can also catalyze the reverse reaction. The sequence is that of Acetate kinase from Helicobacter pylori (strain Shi470).